Consider the following 435-residue polypeptide: MWAPPAAIMGDGPAKKVGNQAPLQTQALQTASLRDGPAKRAVWVRRRSSEPQEPTESKAAKERPKQEVTKAVVVDLGTGYCKCGFAGLPRPTHKISTMVGKPYMETAKTGDNRKETFVGQELNNTNVHLKLVNPLRHGIIVDWDTVQDIWEYLFRQEMKIAPEEHAVLVSDPPLSPHTNREKYAEMLFEAFNTPAMHIAYQSRLSMYSYGRTSGLVVEVGHGVSYVVPIYEGYPLPSITGRLDYAGSDLTAYLLGLLNSAGNEFTQDQMGIVEDIKKKCCFVALDPTEEKRVPLSEHTIRYVLPDGKEIQLCQERFLCSEMFFKPSLIKSMQLGLHTQTVSCLNKCDIALKRDLMGNILLCGGSTMLSGFPNRLQKELSSMCPNDTPQVNVLPERDSAVWTGGSILASLQGFQPLWVHRFEYEEHGPFFLYRRCF.

Disordered stretches follow at residues 1-20 (MWAP…VGNQ) and 29-65 (QTAS…ERPK). The interval 31–51 (ASLRDGPAKRAVWVRRRSSEP) is required for interaction with TES. Residues 47–65 (RSSEPQEPTESKAAKERPK) are compositionally biased toward basic and acidic residues.

This sequence belongs to the actin family. In terms of assembly, interacts (via N-terminus) with TES (via LIM domain 2). Heterodimer with TES; the heterodimer interacts with ENAH to form a heterotrimer. Interacts with ACTL9. Interacts with CYLC1; the interaction may be relevant for proper acrosome attachment to the nuclear envelope.

It is found in the cytoplasm. Its subcellular location is the cytoskeleton. The protein localises to the golgi apparatus. The protein resides in the nucleus. In terms of biological role, essential for normal spermatogenesis and male fertility. Required for normal sperm head morphology, acroplaxome formation, acrosome attachment, and acrosome granule stability. May anchor and stabilize acrosomal adherence to the acroplaxome at least in part by facilitating the presence of F-actin in the subacrosomal space. May play an important role in formation and fusion of Golgi-derived vesicles during acrosome biogenesis. In Macaca fascicularis (Crab-eating macaque), this protein is Actin-like protein 7A (ACTL7A).